Here is a 597-residue protein sequence, read N- to C-terminus: Large ribosomal subunit assembly factor BipA (597 aa).

A tr-type G domain is found at 3-198; it reads LPIRNVAIIA…AILHHVPPPA (196 aa). GTP contacts are provided by residues 15–20 and 128–131; these read DHGKTT and NKID.

Belongs to the TRAFAC class translation factor GTPase superfamily. Classic translation factor GTPase family. BipA subfamily. As to quaternary structure, monomer.

It localises to the cytoplasm. It catalyses the reaction GTP + H2O = GDP + phosphate + H(+). In terms of biological role, a 50S ribosomal subunit assembly protein with GTPase activity, required for 50S subunit assembly at low temperatures, may also play a role in translation. Binds GTP and analogs. Binds the 70S ribosome between the 30S and 50S subunits, in a similar position as ribosome-bound EF-G; it contacts a number of ribosomal proteins, both rRNAs and the A-site tRNA. The sequence is that of Large ribosomal subunit assembly factor BipA from Synechocystis sp. (strain ATCC 27184 / PCC 6803 / Kazusa).